The sequence spans 312 residues: GATA transcription factor 6 (312 aa).

Disordered stretches follow at residues 1-33 (MESV…VDDL), 56-77 (QRKR…STAD), and 136-186 (KSQH…PLWL). Basic and acidic residues predominate over residues 56–71 (QRKRGVSDENTLHRSN). A compositionally biased stretch (basic residues) spans 142-151 (VKTRPKRART). The short motif at 143–150 (KTRPKRAR) is the Nuclear localization signal element. Residues 157–186 (SHGSQSLTDSSSSSTTSSSSSPRPSSPLWL) show a composition bias toward low complexity. The GATA-type zinc-finger motif lies at 217–271 (QTQTRQCGHCGVQKTPQWRAGPLGAKTLCNACGVRYKSGRLLPEYRPACSPTFSS).

The protein belongs to the type IV zinc-finger family. Class A subfamily.

The protein localises to the nucleus. Transcriptional activator that specifically binds 5'-GATA-3' or 5'-GAT-3' motifs within gene promoters. May be involved in the regulation of some light-responsive genes. This is GATA transcription factor 6 (GATA6) from Arabidopsis thaliana (Mouse-ear cress).